Reading from the N-terminus, the 152-residue chain is Bacchus (152 aa).

Residues 29-41 show a composition bias toward basic and acidic residues; that stretch reads DLKAKAAAEDKAA. Positions 29 to 152 are disordered; the sequence is DLKAKAAAED…DDGSGSDDQA (124 aa). Residues 42 to 51 show a composition bias toward low complexity; sequence AADAAGDAAD. Over residues 72–89 the composition is skewed to basic and acidic residues; that stretch reads ESVKGTKRPAEAKSAESK. Acidic residues predominate over residues 99-152; that stretch reads GDSDEEEALEEIIEGDSEIESDEYDIPYDGEEDDIECDDDDDDNDDGSGSDDQA.

Expressed in the brain.

It is found in the nucleus. Functionally, negatively regulates tyramine beta-hydroxylase tbh and thus the conversion of tyramine (TA) to octopamine (OA). In tyrosine decarboxylase 2 (Tdc2) neurons, acts in an amine-mediated signaling pathway to negatively regulate acute ethanol sensitivity probably via tbh-mediated depletion of TA. The polypeptide is Bacchus (Drosophila melanogaster (Fruit fly)).